Consider the following 647-residue polypeptide: LIM domain kinase 1 (647 aa).

LIM zinc-binding domains lie at 25–75 (CASC…CKKD) and 84–137 (CHGC…CGQC). Positions 165–258 (LVSIPASAHG…LLQLTLEHDP (94 aa)) constitute a PDZ domain. Position 210 is a phosphoserine (Ser-210). Thr-229 carries the post-translational modification Phosphothreonine. Residues 256 to 316 (HDPHDSLGHG…SLVSPASQRK (61 aa)) are disordered. Positions 278 to 289 (HTPSGQAGSSAR) are enriched in polar residues. 4 positions are modified to phosphoserine: Ser-298, Ser-302, Ser-307, and Ser-310. The residue at position 323 (Ser-323) is a Phosphoserine; by MAPKAPK2. Ser-337 bears the Phosphoserine mark. Residues 339-604 (LIHGEVLGKG…PSFVKLEQWL (266 aa)) form the Protein kinase domain. Residues 345–353 (LGKGCFGQA) and Lys-368 each bind ATP. Asp-460 is an active-site residue. At Thr-508 the chain carries Phosphothreonine; by ROCK1 and PAK1.

The protein belongs to the protein kinase superfamily. TKL Ser/Thr protein kinase family. As to quaternary structure, interacts (via LIM domain) with the cytoplasmic domain of NRG1. Interacts with NISCH. Interacts with RLIM and RNF6. Self-associates to form homodimers. Interacts with HSP90AA1; this interaction promotes LIMK1 dimerization and subsequent transphosphorylation. Interacts with CDKN1C. Interacts with SSH1. Interacts with ROCK1. Interacts (via LIM zinc-binding domains) with FAM89B/LRAP25 (via LRR repeat). Forms a tripartite complex with CDC42BPA, CDC42BPB and FAM89B/LRAP25. Post-translationally, autophosphorylated. Phosphorylated on Thr-508 by ROCK1 and PAK1, resulting in activation. Phosphorylated by PAK4 which increases the ability of LIMK1 to phosphorylate cofilin. Phosphorylated at Ser-323 by MAPKAPK2 during activation of VEGFA-induced signaling, which results in activation of LIMK1 and promotion of actin reorganization, cell migration, and tubule formation of endothelial cells. Dephosphorylated and inactivated by SSH1. Phosphorylated by CDC42BP. In terms of processing, ubiquitinated. 'Lys-48'-linked polyubiquitination by RNF6 leads to proteasomal degradation through the 26S proteasome, modulating LIMK1 levels in the growth cone and its effect on axonal outgrowth. Also polyubiquitinated by RLIM.

It is found in the cytoplasm. Its subcellular location is the nucleus. The protein localises to the cytoskeleton. It localises to the cell projection. The protein resides in the lamellipodium. It catalyses the reaction L-seryl-[protein] + ATP = O-phospho-L-seryl-[protein] + ADP + H(+). It carries out the reaction L-threonyl-[protein] + ATP = O-phospho-L-threonyl-[protein] + ADP + H(+). In terms of biological role, serine/threonine-protein kinase that plays an essential role in the regulation of actin filament dynamics. Acts downstream of several Rho family GTPase signal transduction pathways. Activated by upstream kinases including ROCK1, PAK1 and PAK4, which phosphorylate LIMK1 on a threonine residue located in its activation loop. LIMK1 subsequently phosphorylates and inactivates the actin binding/depolymerizing factors cofilin-1/CFL1, cofilin-2/CFL2 and destrin/DSTN, thereby preventing the cleavage of filamentous actin (F-actin), and stabilizing the actin cytoskeleton. In this way LIMK1 regulates several actin-dependent biological processes including cell motility, cell cycle progression, and differentiation. Phosphorylates TPPP on serine residues, thereby promoting microtubule disassembly. Stimulates axonal outgrowth and may be involved in brain development. This Rattus norvegicus (Rat) protein is LIM domain kinase 1 (Limk1).